The primary structure comprises 435 residues: Tektin-4 (435 aa).

Basic and acidic residues predominate over residues aspartate 60 to serine 69. A disordered region spans residues aspartate 60–glutamine 96. Residues glutamine 70–glutamine 85 show a composition bias toward low complexity. 3 coiled-coil regions span residues lysine 102–arginine 180, leucine 310–alanine 336, and phenylalanine 363–leucine 411.

This sequence belongs to the tektin family. In terms of assembly, microtubule inner protein component of sperm flagellar doublet microtubules. Post-translationally, ubiquitinated, leading to its degradation. Deubiquitinated by USP16, promoting its stability. Strongly expressed in spermatozoa. Also detected at low levels in pancreas. Expressed in airway epithelial cells.

The protein localises to the cytoplasm. Its subcellular location is the cytoskeleton. It localises to the cilium axoneme. The protein resides in the flagellum axoneme. Its function is as follows. Microtubule inner protein (MIP) part of the dynein-decorated doublet microtubules (DMTs) in cilia and flagellar axoneme. Forms filamentous polymers in the walls of ciliary and flagellar microtubules. Contributes to normal sperm motility. The polypeptide is Tektin-4 (Homo sapiens (Human)).